Here is a 123-residue protein sequence, read N- to C-terminus: NADH-quinone oxidoreductase subunit A (123 aa).

The next 3 membrane-spanning stretches (helical) occupy residues 11 to 31, 64 to 84, and 93 to 113; these read YLPI…IMIL, ICFY…AFLV, and IGKI…IGFI.

This sequence belongs to the complex I subunit 3 family. As to quaternary structure, NDH-1 is composed of 14 different subunits. Subunits NuoA, H, J, K, L, M, N constitute the membrane sector of the complex.

It is found in the cell inner membrane. The catalysed reaction is a quinone + NADH + 5 H(+)(in) = a quinol + NAD(+) + 4 H(+)(out). In terms of biological role, NDH-1 shuttles electrons from NADH, via FMN and iron-sulfur (Fe-S) centers, to quinones in the respiratory chain. The immediate electron acceptor for the enzyme in this species is believed to be ubiquinone. Couples the redox reaction to proton translocation (for every two electrons transferred, four hydrogen ions are translocated across the cytoplasmic membrane), and thus conserves the redox energy in a proton gradient. In Rickettsia conorii (strain ATCC VR-613 / Malish 7), this protein is NADH-quinone oxidoreductase subunit A.